Consider the following 614-residue polypeptide: DNA mismatch repair protein MutL (614 aa).

Belongs to the DNA mismatch repair MutL/HexB family.

Its function is as follows. This protein is involved in the repair of mismatches in DNA. It is required for dam-dependent methyl-directed DNA mismatch repair. May act as a 'molecular matchmaker', a protein that promotes the formation of a stable complex between two or more DNA-binding proteins in an ATP-dependent manner without itself being part of a final effector complex. This Chlorobium phaeovibrioides (strain DSM 265 / 1930) (Prosthecochloris vibrioformis (strain DSM 265)) protein is DNA mismatch repair protein MutL.